The following is a 312-amino-acid chain: tRNA uridine(34) hydroxylase (312 aa).

Positions 123–217 constitute a Rhodanese domain; the sequence is SDPEVLLIDT…YLEEVPQEQS (95 aa). Cys-177 serves as the catalytic Cysteine persulfide intermediate. The segment covering 282 to 293 has biased composition (basic and acidic residues); that stretch reads ARERQKQIELAR. Positions 282–312 are disordered; that stretch reads ARERQKQIELARQRNQPHPLGRDPRQSTLEN.

Belongs to the TrhO family.

The enzyme catalyses uridine(34) in tRNA + AH2 + O2 = 5-hydroxyuridine(34) in tRNA + A + H2O. Catalyzes oxygen-dependent 5-hydroxyuridine (ho5U) modification at position 34 in tRNAs. In Pseudomonas aeruginosa (strain UCBPP-PA14), this protein is tRNA uridine(34) hydroxylase.